The sequence spans 528 residues: RNA polymerase sigma factor SigA (528 aa).

Positions 1–10 (MAATKASTAT) are enriched in polar residues. The disordered stretch occupies residues 1 to 211 (MAATKASTAT…FVWDEDESEA (211 aa)). Composition is skewed to low complexity over residues 19 to 31 (TKSP…GAKT), 38 to 56 (AKSA…PAAR), and 80 to 92 (AAKS…PSAR). Basic and acidic residues predominate over residues 100-109 (APKDAQHEAA). Residues 110 to 173 (TDPEDALDSV…DDEDHEDLEA (64 aa)) are compositionally biased toward acidic residues. The segment at 295 to 365 (LLEANLRLVV…TRAMADQART (71 aa)) is sigma-70 factor domain-2. The Interaction with polymerase core subunit RpoC signature appears at 319–322 (DLIQ). Residues 374–450 (EVINKLGRIQ…DSEAVVAVDA (77 aa)) are sigma-70 factor domain-3. Residues 463–516 (VLDTLSEREAGVVRLRFGLTDGQPRTLDEIGQVYGVTRERIRQIESKTMSKLRH) are sigma-70 factor domain-4. The segment at residues 489–508 (LDEIGQVYGVTRERIRQIES) is a DNA-binding region (H-T-H motif).

The protein belongs to the sigma-70 factor family. RpoD/SigA subfamily. In terms of assembly, interacts transiently with the RNA polymerase catalytic core.

The protein localises to the cytoplasm. Its function is as follows. Sigma factors are initiation factors that promote the attachment of RNA polymerase to specific initiation sites and are then released. This sigma factor is the primary sigma factor during exponential growth. The chain is RNA polymerase sigma factor SigA from Mycobacterium bovis (strain ATCC BAA-935 / AF2122/97).